We begin with the raw amino-acid sequence, 153 residues long: 6,7-dimethyl-8-ribityllumazine synthase (153 aa).

5-amino-6-(D-ribitylamino)uracil is bound by residues Phe23, 57-59, and 81-83; these read AYE and AVI. 86-87 lines the (2S)-2-hydroxy-3-oxobutyl phosphate pocket; it reads AT. His89 serves as the catalytic Proton donor. Residue Phe113 participates in 5-amino-6-(D-ribitylamino)uracil binding. Residue Arg127 participates in (2S)-2-hydroxy-3-oxobutyl phosphate binding.

The protein belongs to the DMRL synthase family.

The enzyme catalyses (2S)-2-hydroxy-3-oxobutyl phosphate + 5-amino-6-(D-ribitylamino)uracil = 6,7-dimethyl-8-(1-D-ribityl)lumazine + phosphate + 2 H2O + H(+). The protein operates within cofactor biosynthesis; riboflavin biosynthesis; riboflavin from 2-hydroxy-3-oxobutyl phosphate and 5-amino-6-(D-ribitylamino)uracil: step 1/2. Its function is as follows. Catalyzes the formation of 6,7-dimethyl-8-ribityllumazine by condensation of 5-amino-6-(D-ribitylamino)uracil with 3,4-dihydroxy-2-butanone 4-phosphate. This is the penultimate step in the biosynthesis of riboflavin. This Leptospira borgpetersenii serovar Hardjo-bovis (strain JB197) protein is 6,7-dimethyl-8-ribityllumazine synthase.